Here is a 427-residue protein sequence, read N- to C-terminus: Adenylosuccinate synthetase (427 aa).

Residues 12-18 (GDEGKGK) and 40-42 (GHT) each bind GTP. Asp13 functions as the Proton acceptor in the catalytic mechanism. Asp13 and Gly40 together coordinate Mg(2+). Residues 13–16 (DEGK), 38–41 (NAGH), Thr128, Arg142, Gln223, Thr238, and Arg302 contribute to the IMP site. The active-site Proton donor is His41. Residue 298–304 (VTTGRAR) participates in substrate binding. GTP-binding positions include Arg304, 330–332 (KLD), and 412–414 (GVG).

It belongs to the adenylosuccinate synthetase family. As to quaternary structure, homodimer. It depends on Mg(2+) as a cofactor.

It is found in the cytoplasm. It catalyses the reaction IMP + L-aspartate + GTP = N(6)-(1,2-dicarboxyethyl)-AMP + GDP + phosphate + 2 H(+). Its pathway is purine metabolism; AMP biosynthesis via de novo pathway; AMP from IMP: step 1/2. Functionally, plays an important role in the de novo pathway of purine nucleotide biosynthesis. Catalyzes the first committed step in the biosynthesis of AMP from IMP. This Frankia alni (strain DSM 45986 / CECT 9034 / ACN14a) protein is Adenylosuccinate synthetase.